A 469-amino-acid polypeptide reads, in one-letter code: Cysteine--tRNA ligase (469 aa).

Cys29 lines the Zn(2+) pocket. A 'HIGH' region motif is present at residues 31–41; that stretch reads PTVYNYIHIGN. Residues Cys210, His235, and Glu239 each coordinate Zn(2+). The 'KMSKS' region signature appears at 267–271; sequence KMSKS. Lys270 serves as a coordination point for ATP.

This sequence belongs to the class-I aminoacyl-tRNA synthetase family. In terms of assembly, monomer. Requires Zn(2+) as cofactor.

The protein resides in the cytoplasm. The catalysed reaction is tRNA(Cys) + L-cysteine + ATP = L-cysteinyl-tRNA(Cys) + AMP + diphosphate. The polypeptide is Cysteine--tRNA ligase (Thermosipho melanesiensis (strain DSM 12029 / CIP 104789 / BI429)).